The chain runs to 426 residues: Serine--tRNA ligase (426 aa).

The segment at Lys-36 to Glu-66 is disordered. Residues Asp-46–Ser-55 are compositionally biased toward polar residues. Thr-233–Glu-235 provides a ligand contact to L-serine. Arg-264–Glu-266 contacts ATP. Position 287 (Glu-287) interacts with L-serine. Glu-351–Ser-354 contacts ATP. Residue Ser-387 coordinates L-serine.

This sequence belongs to the class-II aminoacyl-tRNA synthetase family. Type-1 seryl-tRNA synthetase subfamily. As to quaternary structure, homodimer. The tRNA molecule binds across the dimer.

Its subcellular location is the cytoplasm. The enzyme catalyses tRNA(Ser) + L-serine + ATP = L-seryl-tRNA(Ser) + AMP + diphosphate + H(+). The catalysed reaction is tRNA(Sec) + L-serine + ATP = L-seryl-tRNA(Sec) + AMP + diphosphate + H(+). Its pathway is aminoacyl-tRNA biosynthesis; selenocysteinyl-tRNA(Sec) biosynthesis; L-seryl-tRNA(Sec) from L-serine and tRNA(Sec): step 1/1. Functionally, catalyzes the attachment of serine to tRNA(Ser). Is also able to aminoacylate tRNA(Sec) with serine, to form the misacylated tRNA L-seryl-tRNA(Sec), which will be further converted into selenocysteinyl-tRNA(Sec). The sequence is that of Serine--tRNA ligase from Francisella tularensis subsp. novicida (strain U112).